We begin with the raw amino-acid sequence, 607 residues long: Elongation factor 4 (607 aa).

The region spanning 6–188 (DRIRNFSIIA…AIVARIPAPK (183 aa)) is the tr-type G domain. Residues 18–23 (DHGKST) and 135–138 (NKID) contribute to the GTP site.

This sequence belongs to the TRAFAC class translation factor GTPase superfamily. Classic translation factor GTPase family. LepA subfamily.

The protein resides in the cell inner membrane. It carries out the reaction GTP + H2O = GDP + phosphate + H(+). Functionally, required for accurate and efficient protein synthesis under certain stress conditions. May act as a fidelity factor of the translation reaction, by catalyzing a one-codon backward translocation of tRNAs on improperly translocated ribosomes. Back-translocation proceeds from a post-translocation (POST) complex to a pre-translocation (PRE) complex, thus giving elongation factor G a second chance to translocate the tRNAs correctly. Binds to ribosomes in a GTP-dependent manner. The chain is Elongation factor 4 from Rhizorhabdus wittichii (strain DSM 6014 / CCUG 31198 / JCM 15750 / NBRC 105917 / EY 4224 / RW1) (Sphingomonas wittichii).